Consider the following 261-residue polypeptide: uncharacterized protein (261 aa).

The segment at 1-22 is disordered; sequence MAETTEPPSDAGTSQADAMALA. The chain crosses the membrane as a helical span at residues 107–127; it reads IAMAAAVVIICGFTGLSGYIV.

The protein to M.tuberculosis Rv1362c.

Its subcellular location is the membrane. This is an uncharacterized protein from Mycobacterium tuberculosis (strain ATCC 25618 / H37Rv).